The primary structure comprises 228 residues: NAD(P)H-hydrate epimerase (228 aa).

In terms of domain architecture, YjeF N-terminal spans 9–215 (AISIDEELFN…RLEEKYSLEL (207 aa)). 58 to 62 (NNGGD) lines the (6S)-NADPHX pocket. K(+)-binding residues include asparagine 59 and aspartate 123. (6S)-NADPHX is bound by residues 127–133 (GFSFKPP) and aspartate 156. Serine 159 contributes to the K(+) binding site.

The protein belongs to the NnrE/AIBP family. K(+) serves as cofactor.

The catalysed reaction is (6R)-NADHX = (6S)-NADHX. The enzyme catalyses (6R)-NADPHX = (6S)-NADPHX. In terms of biological role, catalyzes the epimerization of the S- and R-forms of NAD(P)HX, a damaged form of NAD(P)H that is a result of enzymatic or heat-dependent hydration. This is a prerequisite for the S-specific NAD(P)H-hydrate dehydratase to allow the repair of both epimers of NAD(P)HX. In Anopheles darlingi (Mosquito), this protein is NAD(P)H-hydrate epimerase.